Consider the following 246-residue polypeptide: Probable transcriptional regulatory protein ESA_01378 (246 aa).

The protein belongs to the TACO1 family.

It is found in the cytoplasm. The sequence is that of Probable transcriptional regulatory protein ESA_01378 from Cronobacter sakazakii (strain ATCC BAA-894) (Enterobacter sakazakii).